The following is a 277-amino-acid chain: Ribosomal RNA small subunit methyltransferase A (277 aa).

Residues Asn23, Leu25, Gly50, Glu75, Asp98, and Asn121 each coordinate S-adenosyl-L-methionine.

This sequence belongs to the class I-like SAM-binding methyltransferase superfamily. rRNA adenine N(6)-methyltransferase family. RsmA subfamily.

The protein localises to the cytoplasm. The catalysed reaction is adenosine(1518)/adenosine(1519) in 16S rRNA + 4 S-adenosyl-L-methionine = N(6)-dimethyladenosine(1518)/N(6)-dimethyladenosine(1519) in 16S rRNA + 4 S-adenosyl-L-homocysteine + 4 H(+). Its function is as follows. Specifically dimethylates two adjacent adenosines (A1518 and A1519) in the loop of a conserved hairpin near the 3'-end of 16S rRNA in the 30S particle. May play a critical role in biogenesis of 30S subunits. This chain is Ribosomal RNA small subunit methyltransferase A, found in Paraburkholderia xenovorans (strain LB400).